The following is an 823-amino-acid chain: NAD-dependent histone deacetylase sirtuin-1 (823 aa).

Over residues 41-67 the composition is skewed to low complexity; the sequence is LASTSTEAEAEAEATATTTEPATSELA. The disordered stretch occupies residues 41 to 146; it reads LASTSTEAEA…SSSNCSSSVE (106 aa). A compositionally biased stretch (basic and acidic residues) spans 72–95; that stretch reads GEIKTKTLAAREEQEIGANLEHKT. Positions 104–137 are enriched in acidic residues; that stretch reads EDEDDEEEEEEDDEEEEEDDEEGITGTSNEDEDS. The Deacetylase sirtuin-type domain occupies 204-499; the sequence is KLASVNTFDD…LCCDESVLTE (296 aa). Residues 229-248 and 313-316 contribute to the NAD(+) site; these read GAGV…NGIY and QNID. Residue His-331 is the Proton acceptor of the active site. Zn(2+)-binding residues include Cys-339, Cys-342, Cys-363, and Cys-366. Residues 427–429, 452–454, and Ser-469 contribute to the NAD(+) site; these read GSS and NRE. Ser-618 and Ser-621 each carry phosphoserine. Acidic residues predominate over residues 698–707; the sequence is DYSDDDDEEE. 2 disordered regions span residues 698–722 and 777–823; these read DYSD…GNVG and IIEQ…LAAV. A compositionally biased stretch (basic and acidic residues) spans 798–813; sequence PSEENKQQTQIERSEE. A compositionally biased stretch (pro residues) spans 814-823; the sequence is SPPPGQLAAV.

It belongs to the sirtuin family. Class I subfamily. As to quaternary structure, interacts with the transcriptional repressors hairy (hry) and deadpan (dpn); via basic domains. Associates with the Esc/E(z) histone methyltransferase complex. Interacts directly with E(z) and HDAC1/Rpd3. Zn(2+) is required as a cofactor.

The protein resides in the cytoplasm. Its subcellular location is the nucleus. It is found in the chromosome. It catalyses the reaction N(6)-acetyl-L-lysyl-[protein] + NAD(+) + H2O = 2''-O-acetyl-ADP-D-ribose + nicotinamide + L-lysyl-[protein]. NAD-dependent histone deacetylase involved in heterochromatic silencing. Mildly suppresses the heterochromatin-mediated silencing phenomenon known as position-effect variegation (PEV). Required for epigenetic silencing of the polycomb group proteins. Has histone H4 deacetylase activity in vitro. Required maternally for establishing proper segmentation of the embryo. Involved in sex determination. May be involved in the regulation of life span. In Drosophila melanogaster (Fruit fly), this protein is NAD-dependent histone deacetylase sirtuin-1.